Reading from the N-terminus, the 366-residue chain is Class I histocompatibility antigen, Gogo-C*0203 alpha chain (366 aa).

The first 24 residues, 1–24 (MRVMAPRTLILLLSGALALTETWA), serve as a signal peptide directing secretion. The interval 25–114 (GSHSMRYFYT…LRGYYNQSED (90 aa)) is alpha-1. At 25-308 (GSHSMRYFYT…EPSSQPTIPI (284 aa)) the chain is on the extracellular side. N110 carries N-linked (GlcNAc...) asparagine glycosylation. The segment at 115–206 (GSHTLQSMYG…ENGKETLQRA (92 aa)) is alpha-2. 2 cysteine pairs are disulfide-bonded: C125/C188 and C227/C283. Residues 207–298 (EPPKTHVTHH…GLPEPLTLRW (92 aa)) form an alpha-3 region. In terms of domain architecture, Ig-like C1-type spans 209-297 (PKTHVTHHPL…EGLPEPLTLR (89 aa)). The interval 299 to 308 (EPSSQPTIPI) is connecting peptide. Residues 309 to 332 (VGIVVGLAVLVVLAVLGAVVTAMM) form a helical membrane-spanning segment. Residues 333–366 (CRRKSSGGKGGSCSQAACSNSAQGSDESLITCKA) lie on the Cytoplasmic side of the membrane.

It belongs to the MHC class I family. In terms of assembly, heterodimer of an alpha chain and a beta chain (beta-2-microglobulin).

Its subcellular location is the membrane. Involved in the presentation of foreign antigens to the immune system. In Gorilla gorilla gorilla (Western lowland gorilla), this protein is Class I histocompatibility antigen, Gogo-C*0203 alpha chain.